Consider the following 331-residue polypeptide: Phosphoribosylformylglycinamidine cyclo-ligase (331 aa).

This sequence belongs to the AIR synthase family.

The protein localises to the cytoplasm. It carries out the reaction 2-formamido-N(1)-(5-O-phospho-beta-D-ribosyl)acetamidine + ATP = 5-amino-1-(5-phospho-beta-D-ribosyl)imidazole + ADP + phosphate + H(+). Its pathway is purine metabolism; IMP biosynthesis via de novo pathway; 5-amino-1-(5-phospho-D-ribosyl)imidazole from N(2)-formyl-N(1)-(5-phospho-D-ribosyl)glycinamide: step 2/2. This chain is Phosphoribosylformylglycinamidine cyclo-ligase, found in Clostridium botulinum (strain 657 / Type Ba4).